The sequence spans 436 residues: 3-ketoacyl-CoA thiolase (436 aa).

Catalysis depends on Cys99, which acts as the Acyl-thioester intermediate. Active-site proton acceptor residues include His392 and Cys422.

This sequence belongs to the thiolase-like superfamily. Thiolase family. In terms of assembly, heterotetramer of two alpha chains (FadJ) and two beta chains (FadI).

The protein localises to the cytoplasm. It carries out the reaction an acyl-CoA + acetyl-CoA = a 3-oxoacyl-CoA + CoA. Its pathway is lipid metabolism; fatty acid beta-oxidation. Its function is as follows. Catalyzes the final step of fatty acid oxidation in which acetyl-CoA is released and the CoA ester of a fatty acid two carbons shorter is formed. This is 3-ketoacyl-CoA thiolase from Escherichia coli (strain ATCC 8739 / DSM 1576 / NBRC 3972 / NCIMB 8545 / WDCM 00012 / Crooks).